We begin with the raw amino-acid sequence, 100 residues long: Aspartyl/glutamyl-tRNA(Asn/Gln) amidotransferase subunit C (100 aa).

Belongs to the GatC family. Heterotrimer of A, B and C subunits.

The enzyme catalyses L-glutamyl-tRNA(Gln) + L-glutamine + ATP + H2O = L-glutaminyl-tRNA(Gln) + L-glutamate + ADP + phosphate + H(+). The catalysed reaction is L-aspartyl-tRNA(Asn) + L-glutamine + ATP + H2O = L-asparaginyl-tRNA(Asn) + L-glutamate + ADP + phosphate + 2 H(+). Its function is as follows. Allows the formation of correctly charged Asn-tRNA(Asn) or Gln-tRNA(Gln) through the transamidation of misacylated Asp-tRNA(Asn) or Glu-tRNA(Gln) in organisms which lack either or both of asparaginyl-tRNA or glutaminyl-tRNA synthetases. The reaction takes place in the presence of glutamine and ATP through an activated phospho-Asp-tRNA(Asn) or phospho-Glu-tRNA(Gln). This chain is Aspartyl/glutamyl-tRNA(Asn/Gln) amidotransferase subunit C, found in Streptococcus sanguinis (strain SK36).